The chain runs to 201 residues: Glutathione S-transferase (201 aa).

The region spanning 1–81 (MKLYYKVGAC…YIGDHSDVAA (81 aa)) is the GST N-terminal domain. Glutathione is bound by residues C10, K35, V52, 65-66 (QN), and 102-105 (SDLH). A GST C-terminal domain is found at 87-201 (GSIERARLQE…QKAFKEEGLN (115 aa)).

Belongs to the GST superfamily. Beta family. Homodimer.

It is found in the cytoplasm. The catalysed reaction is RX + glutathione = an S-substituted glutathione + a halide anion + H(+). Functionally, conjugation of reduced glutathione to a wide number of exogenous and endogenous hydrophobic electrophiles. The polypeptide is Glutathione S-transferase (gst) (Brucella anthropi (Ochrobactrum anthropi)).